The sequence spans 141 residues: Holo-[acyl-carrier-protein] synthase (141 aa).

The Mg(2+) site is built by Asp-7 and Glu-57.

The protein belongs to the P-Pant transferase superfamily. AcpS family. Requires Mg(2+) as cofactor.

Its subcellular location is the cytoplasm. The enzyme catalyses apo-[ACP] + CoA = holo-[ACP] + adenosine 3',5'-bisphosphate + H(+). Functionally, transfers the 4'-phosphopantetheine moiety from coenzyme A to a Ser of acyl-carrier-protein. This chain is Holo-[acyl-carrier-protein] synthase, found in Corynebacterium efficiens (strain DSM 44549 / YS-314 / AJ 12310 / JCM 11189 / NBRC 100395).